The chain runs to 629 residues: Bifunctional protein ArgHA (629 aa).

The argininosuccinate lyase stretch occupies residues 1 to 499; sequence MALWGGRFSQ…NLPRSRSDLV (499 aa). One can recognise an N-acetyltransferase domain in the interval 464 to 598; sequence ISIRAARLTD…EKVLKDCDMC (135 aa). Residues 500-629 form an amino-acid acetyltransferase region; sequence KAVGTFAVTE…INLKAEKLAS (130 aa).

It in the N-terminal section; belongs to the lyase 1 family. Argininosuccinate lyase subfamily. In the C-terminal section; belongs to the acetyltransferase family. ArgA subfamily.

It localises to the cytoplasm. The enzyme catalyses 2-(N(omega)-L-arginino)succinate = fumarate + L-arginine. The catalysed reaction is L-glutamate + acetyl-CoA = N-acetyl-L-glutamate + CoA + H(+). The protein operates within amino-acid biosynthesis; L-arginine biosynthesis; N(2)-acetyl-L-ornithine from L-glutamate: step 1/4. It participates in amino-acid biosynthesis; L-arginine biosynthesis; L-arginine from L-ornithine and carbamoyl phosphate: step 3/3. This is Bifunctional protein ArgHA (argHA) from Moritella abyssi.